A 318-amino-acid polypeptide reads, in one-letter code: Glycerol 2-dehydrogenase (NADP(+)) (318 aa).

Y52 serves as the catalytic Proton donor. H115 contacts substrate. NADP(+) is bound at residue 217–277; the sequence is SPLGSQNQVP…SSTPSRIESN (61 aa).

Belongs to the aldo/keto reductase family.

It carries out the reaction glycerol + NADP(+) = dihydroxyacetone + NADPH + H(+). Its function is as follows. Glycerol oxidoreductase probably involved in glycerol synthesis. In Hypocrea jecorina (Trichoderma reesei), this protein is Glycerol 2-dehydrogenase (NADP(+)) (gld2).